The chain runs to 512 residues: GMP synthase [glutamine-hydrolyzing] (512 aa).

The Glutamine amidotransferase type-1 domain occupies 7–197; that stretch reads LVLVVDFGGQ…LFKVAGLKAD (191 aa). The active-site Nucleophile is Cys-84. Catalysis depends on residues His-171 and Glu-173. Residues 198–387 form the GMPS ATP-PPase domain; it reads WSMASFAEEK…LGIPHKLVWR (190 aa). 225–231 serves as a coordination point for ATP; it reads SGGVDSS.

Homodimer.

It carries out the reaction XMP + L-glutamine + ATP + H2O = GMP + L-glutamate + AMP + diphosphate + 2 H(+). It functions in the pathway purine metabolism; GMP biosynthesis; GMP from XMP (L-Gln route): step 1/1. In terms of biological role, catalyzes the synthesis of GMP from XMP. This chain is GMP synthase [glutamine-hydrolyzing], found in Clostridium novyi (strain NT).